The chain runs to 867 residues: Inactive tyrosine-protein kinase kin-32 (867 aa).

Residues 3–327 (GLARVFLIGG…GYQMLYNQRD (325 aa)) enclose the FERM domain. Residues 367-631 (ITLKELIGGG…IIEDVRQQII (265 aa)) enclose the Protein kinase domain. ATP-binding positions include 373–381 (IGGGQFGNV) and Lys-400. Residues 662 to 691 (TLYRTMEDQKRQAEEDAKWLEQEDDEDEDD) are a coiled coil. Positions 674 to 729 (AEEDAKWLEQEDDEDEDDQDIDQIPSTSHSSVENIRTSNGYLHHTPTSTRSLRFED) are disordered. Positions 683-694 (QEDDEDEDDQDI) are enriched in acidic residues. Residues 698–724 (PSTSHSSVENIRTSNGYLHHTPTSTRS) are compositionally biased toward polar residues.

Belongs to the protein kinase superfamily. Tyr protein kinase family. FAK subfamily. Expressed in body wall muscles and some neurons in the head.

Has apparently no tyrosine kinase activity in vitro when expressed in mammalian cells. The chain is Inactive tyrosine-protein kinase kin-32 from Caenorhabditis elegans.